A 450-amino-acid polypeptide reads, in one-letter code: Zinc finger protein 446 (450 aa).

The SCAN box domain maps to 26–108; that stretch reads RLRFRGFCYQ…ALVEGLQHDP (83 aa). Residue lysine 130 forms a Glycyl lysine isopeptide (Lys-Gly) (interchain with G-Cter in SUMO2) linkage. Disordered stretches follow at residues 130-155 and 168-205; these read KTEE…QDTR and EEPN…SFHP. Serine 137 is subject to Phosphoserine. A KRAB domain is found at 208-254; it reads IQEEWGLLDRSQKELYWDAMLEKYGTVVSLGLPPHQPEAQAQSELGM. Phosphoserine is present on serine 218. Disordered regions lie at residues 263–331 and 354–389; these read RSLR…PRKP and HTSG…RRSL. Residues 275–286 are compositionally biased toward pro residues; the sequence is PGCPEAQPPQGP. Over residues 287-306 the composition is skewed to low complexity; sequence GPAAWEGLSGAATPAPTVRP. Phosphothreonine is present on threonine 308. A Glycyl lysine isopeptide (Lys-Gly) (interchain with G-Cter in SUMO2) cross-link involves residue lysine 330. 3 C2H2-type zinc fingers span residues 332–359, 395–422, and 423–450; these read YTCE…SGPG, YPCE…GQRR, and HFCS…PEVP.

This sequence belongs to the krueppel C2H2-type zinc-finger protein family.

Its subcellular location is the nucleus. Its function is as follows. May be involved in transcriptional regulation. The chain is Zinc finger protein 446 (ZNF446) from Homo sapiens (Human).